The sequence spans 231 residues: Ion-translocating oxidoreductase complex subunit E (231 aa).

Helical transmembrane passes span 18–38 (GLVQ…ITNA), 39–59 (LGLG…VSLV), 69–89 (IPVF…LINA), 93–113 (NLYL…VIIG), 127–147 (SAFD…VLGA), 157–177 (LFGG…IHVW), and 182–202 (PFLL…LIAL).

The protein belongs to the NqrDE/RnfAE family. The complex is composed of six subunits: RnfA, RnfB, RnfC, RnfD, RnfE and RnfG.

The protein resides in the cell inner membrane. In terms of biological role, part of a membrane-bound complex that couples electron transfer with translocation of ions across the membrane. The chain is Ion-translocating oxidoreductase complex subunit E from Shewanella frigidimarina (strain NCIMB 400).